A 202-amino-acid chain; its full sequence is Imidazoleglycerol-phosphate dehydratase (202 aa).

The protein belongs to the imidazoleglycerol-phosphate dehydratase family.

The protein localises to the cytoplasm. It catalyses the reaction D-erythro-1-(imidazol-4-yl)glycerol 3-phosphate = 3-(imidazol-4-yl)-2-oxopropyl phosphate + H2O. It functions in the pathway amino-acid biosynthesis; L-histidine biosynthesis; L-histidine from 5-phospho-alpha-D-ribose 1-diphosphate: step 6/9. In Rhizobium etli (strain CIAT 652), this protein is Imidazoleglycerol-phosphate dehydratase.